The chain runs to 450 residues: Paired box protein Pax-8 (450 aa).

Residues 9-135 (GHGGLNQLGG…SSINRIIRTK (127 aa)) constitute a DNA-binding region (paired). Residues 12-68 (GLNQLGGAFVNGRPLPEVVRQRIVDLAHQGVRPCDISRQLRVSHGCVSKILGRYYET) are PAI subdomain. Positions 87–135 (KVVEKIGDYKRQNPTMFAWEIRDRLLAEGVCDNDTVPSVSSINRIIRTK) are RED subdomain. A compositionally biased stretch (polar residues) spans 159–182 (LIPSSAVTPPESPQSDSLGSTYSI). The disordered stretch occupies residues 159–222 (LIPSSAVTPP…QSSSSGPRKH (64 aa)). Ser303 carries the phosphoserine modification.

In terms of assembly, interacts with WWTR1. As to expression, expressed in the excretory system, thyroid gland and Wilms tumors.

The protein localises to the nucleus. In terms of biological role, transcription factor for the thyroid-specific expression of the genes exclusively expressed in the thyroid cell type, maintaining the functional differentiation of such cells. The chain is Paired box protein Pax-8 (PAX8) from Homo sapiens (Human).